Here is a 179-residue protein sequence, read N- to C-terminus: tRNA (cytidine(56)-2'-O)-methyltransferase (179 aa).

S-adenosyl-L-methionine contacts are provided by residues leucine 82, glycine 112–valine 116, and valine 130–glutamate 137.

This sequence belongs to the aTrm56 family. As to quaternary structure, homodimer.

The protein resides in the cytoplasm. The enzyme catalyses cytidine(56) in tRNA + S-adenosyl-L-methionine = 2'-O-methylcytidine(56) in tRNA + S-adenosyl-L-homocysteine + H(+). Specifically catalyzes the AdoMet-dependent 2'-O-ribose methylation of cytidine at position 56 in tRNAs. The sequence is that of tRNA (cytidine(56)-2'-O)-methyltransferase from Methanococcus maripaludis (strain C7 / ATCC BAA-1331).